A 188-amino-acid polypeptide reads, in one-letter code: Pyridoxal 5'-phosphate synthase subunit PdxT (188 aa).

Position 46 to 48 (46 to 48 (GES)) interacts with L-glutamine. Cys-78 acts as the Nucleophile in catalysis. Residues Arg-105 and 134 to 135 (IR) contribute to the L-glutamine site. Residues His-170 and Glu-172 each act as charge relay system in the active site.

This sequence belongs to the glutaminase PdxT/SNO family. As to quaternary structure, in the presence of PdxS, forms a dodecamer of heterodimers. Only shows activity in the heterodimer.

It catalyses the reaction aldehydo-D-ribose 5-phosphate + D-glyceraldehyde 3-phosphate + L-glutamine = pyridoxal 5'-phosphate + L-glutamate + phosphate + 3 H2O + H(+). The catalysed reaction is L-glutamine + H2O = L-glutamate + NH4(+). The protein operates within cofactor biosynthesis; pyridoxal 5'-phosphate biosynthesis. In terms of biological role, catalyzes the hydrolysis of glutamine to glutamate and ammonia as part of the biosynthesis of pyridoxal 5'-phosphate. The resulting ammonia molecule is channeled to the active site of PdxS. The chain is Pyridoxal 5'-phosphate synthase subunit PdxT from Thermotoga neapolitana (strain ATCC 49049 / DSM 4359 / NBRC 107923 / NS-E).